The chain runs to 342 residues: viral G-protein coupled receptor (342 aa).

The Extracellular segment spans residues 1 to 51 (MAAEDFLTIFLDDDESWNETLNMSGYDYSGNFSLEVSVCEMTTVVPYTWNV). N-linked (GlcNAc...) asparagine; by host glycans are attached at residues Asn18, Asn22, and Asn31. A helical membrane pass occupies residues 52–72 (GILSLIFLINVLGNGLVTYIF). Residues 73–92 (CKHRSRAGAIDILLLGICLN) are Cytoplasmic-facing. A helical transmembrane segment spans residues 93 to 113 (SLCLSISLLAEVLMFLFPNII). The Extracellular segment spans residues 114–121 (STGLCRLE). The helical transmembrane segment at 122 to 142 (IFFYYLYVYLDIFSVVCVSLV) threads the bilayer. At 143 to 159 (RYLLVAYSTRSWPKKQS) the chain is on the cytoplasmic side. The helical transmembrane segment at 160-180 (LGWVLTSAALLIALVLSGDAC) threads the bilayer. Over 181-217 (RHRSRVVDPVSKQAMCYENAGNMTADWRLHVRTVSVT) the chain is Extracellular. Residues 218 to 238 (AGFLLPLALLILFYALTWCVV) form a helical membrane-spanning segment. The Cytoplasmic portion of the chain corresponds to 239-251 (RRTKLQARRKVRG). The helical transmembrane segment at 252–272 (VIVAVVLLFFVFCFPYHVLNL) threads the bilayer. Over 273–293 (LDTLLRRRWIRDSCYTRGLIN) the chain is Extracellular. Residues 294–314 (VGLAVTSLLQALYSAVVPLIY) traverse the membrane as a helical segment. Over 315-342 (SCLGSLFRQRMYGLFQSLRQSFMSGATT) the chain is Cytoplasmic.

Belongs to the G-protein coupled receptor 1 family. In terms of assembly, interacts with protein K7; this interaction promotes vGPCR proteasomal degradation. Interacts with host CADM1; this interaction is essential for chronic NF-kappa-B activation.

The protein localises to the host cell membrane. In terms of biological role, receptor that signals constitutively via several signaling pathways including PI3K/AKT as well as mitogen- and stress-activated/MAP kinases. Promotes host cell proliferation and survival, modulates cell migration, stimulates angiogenesis, and recruits inflammatory cells, both in expressing cells and in neighboring cells. Maintains chronic activation of NF-kappa-B via interaction with host CADM1. The chain is viral G-protein coupled receptor (ORF74) from Human herpesvirus 8 type P (isolate GK18) (HHV-8).